A 105-amino-acid polypeptide reads, in one-letter code: Heat shock protein HspQ (105 aa).

Belongs to the HspQ family.

Its subcellular location is the cytoplasm. Functionally, involved in the degradation of certain denaturated proteins, including DnaA, during heat shock stress. In Yersinia enterocolitica serotype O:8 / biotype 1B (strain NCTC 13174 / 8081), this protein is Heat shock protein HspQ.